Reading from the N-terminus, the 688-residue chain is Zinc finger and BTB domain-containing protein 48 (688 aa).

The 64-residue stretch at 26–89 (CDATLDVGGL…FYTGHLALTS (64 aa)) folds into the BTB domain. The interval 119–140 (SVGQAAGGQSGLGPPASQNVNS) is disordered. A Glycyl lysine isopeptide (Lys-Gly) (interchain with G-Cter in SUMO2) cross-link involves residue lysine 143. Residues 161-192 (PRDQEPRGSHSPQRPQLHSPAQSEGPSSLCGK) are disordered. Phosphoserine occurs at positions 169, 171, and 179. The segment covering 170–186 (HSPQRPQLHSPAQSEGP) has biased composition (polar residues). Lysine 263 is covalently cross-linked (Glycyl lysine isopeptide (Lys-Gly) (interchain with G-Cter in SUMO2)). A C2H2-type 1 zinc finger spans residues 291 to 313 (VECPTCHKKFLSKYYLKVHNRKH). Zn(2+) is bound by residues cysteine 293, cysteine 296, histidine 309, histidine 313, cysteine 321, cysteine 324, histidine 337, cysteine 342, cysteine 352, cysteine 355, histidine 368, histidine 372, cysteine 380, cysteine 383, histidine 396, and histidine 401. The segment at 319-344 (FECPKCGKCYFRKENLLEHEARNCMN) adopts a CCHC-type zinc-finger fold. 9 consecutive C2H2-type zinc fingers follow at residues 350 to 372 (FTCS…MVSH), 378 to 401 (YKCS…IKLH), 407 to 430 (HACP…AFKH), 436 to 459 (FVCE…KAKH), 465 to 487 (HVCE…LRTH), 493 to 515 (FQCH…NRTH), 521 to 544 (FSCE…ASRH), 550 to 572 (HFCQ…VRRH), and 578 to 600 (FECT…MEIH). Residues cysteine 552, cysteine 555, histidine 568, cysteine 580, cysteine 583, histidine 596, and histidine 600 each coordinate Zn(2+).

This sequence belongs to the krueppel C2H2-type zinc-finger protein family. In terms of assembly, interacts with EP300. Detected in adrenal gland and neuroblastoma.

Its subcellular location is the nucleus. It is found in the chromosome. The protein resides in the telomere. Plays a critical role in transcriptional regulation and chromatin remodeling. Acts as a regulator of telomere length. Directly binds the telomeric double-stranded 5'-TTAGGG-3' repeat. Preferentially binds to telomeres that have a low concentration of shelterin complex and acts as a regulator of telomere length by initiating telomere trimming, a process that prevents the accumulation of aberrantly long telomeres. Also acts as a transcription regulator that binds to promoter regions. Regulates expression of a small subset of genes, including MTFP1. Acts as a negative regulator of cell proliferation by specifically activating expression of ARF, a tumor suppressor isoform of CDKN2A. Acts as a transcription regulator of CIITA, the major factor regulating MHC class II gene expression. In addition, regulates cellular m6A/m6Am methylation on RNA by facilitating the recruitment of the RNA demethylase, FTO, to target mRNAs. This is Zinc finger and BTB domain-containing protein 48 from Homo sapiens (Human).